A 391-amino-acid chain; its full sequence is Salivary protein TRIO (391 aa).

Residues 1 to 24 (MCRGLSAVLILLVSLSAQLHVVVG) form the signal peptide. Residue asparagine 323 is glycosylated (N-linked (GlcNAc...) asparagine).

Female salivary gland (at protein level). Female saliva (at protein level). Not detected in female midgut, head and carcass (at protein level). Not detected in male tissues (at protein level).

The protein localises to the secreted. Functionally, required for efficient probing on a mammalian host. Alters the local inflammatory response in the host skin following a mosquito bite by suppressing TNF-alpha/TNF expression. (Microbial infection) Contributes to optimal transmission of Plasmodium berghei sporozoites to mice. In terms of biological role, (Microbial infection) Contributes to optimal transmission of Plasmodium falciparum sporozoites to mammalian host. The chain is Salivary protein TRIO from Anopheles gambiae (African malaria mosquito).